Reading from the N-terminus, the 206-residue chain is Mediator of RNA polymerase II transcription subunit 19 (206 aa).

A disordered region spans residues 171-206; it reads GTGTKTKKRKYKSNGSSMASPNTELQPDDMKRRRLE. Residues 183 to 195 are compositionally biased toward polar residues; the sequence is SNGSSMASPNTEL.

The protein belongs to the Mediator complex subunit 19 family. In terms of assembly, component of the Mediator complex.

It localises to the nucleus. Component of the Mediator complex, a coactivator involved in the regulated transcription of nearly all RNA polymerase II-dependent genes. Mediator functions as a bridge to convey information from gene-specific regulatory proteins to the basal RNA polymerase II transcription machinery. Mediator is recruited to promoters by direct interactions with regulatory proteins and serves as a scaffold for the assembly of a functional preinitiation complex with RNA polymerase II and the general transcription factors. The sequence is that of Mediator of RNA polymerase II transcription subunit 19 (ROX3) from Kluyveromyces lactis (strain ATCC 8585 / CBS 2359 / DSM 70799 / NBRC 1267 / NRRL Y-1140 / WM37) (Yeast).